We begin with the raw amino-acid sequence, 562 residues long: Thermosome subunit alpha (562 aa).

2 disordered regions span residues 1–23 (MAQQ…TSGE) and 526–551 (GGQV…GMGG). Residues 537 to 551 (GPAGGPGGMGGGMGG) show a composition bias toward gly residues.

The protein belongs to the TCP-1 chaperonin family. In terms of assembly, forms an oligomeric complex of eight-membered rings.

In terms of biological role, molecular chaperone; binds unfolded polypeptides in vitro, and has a weak ATPase activity. This chain is Thermosome subunit alpha (thsA), found in Halobacterium salinarum (strain ATCC 700922 / JCM 11081 / NRC-1) (Halobacterium halobium).